The sequence spans 343 residues: ATP-dependent 6-phosphofructokinase (343 aa).

ATP is bound by residues Gly-10 and 103–106 (GEGT). Residue Glu-104 coordinates Mg(2+). Substrate-binding positions include 126–128 (TID), Arg-163, 170–172 (MGR), Glu-223, Arg-267, and 273–276 (HVQR). Asp-128 functions as the Proton acceptor in the catalytic mechanism.

It belongs to the phosphofructokinase type A (PFKA) family. Mixed-substrate PFK group III subfamily. As to quaternary structure, homodimer or homotetramer. The cofactor is Mg(2+).

It localises to the cytoplasm. The catalysed reaction is beta-D-fructose 6-phosphate + ATP = beta-D-fructose 1,6-bisphosphate + ADP + H(+). The protein operates within carbohydrate degradation; glycolysis; D-glyceraldehyde 3-phosphate and glycerone phosphate from D-glucose: step 3/4. Functionally, catalyzes the phosphorylation of D-fructose 6-phosphate to fructose 1,6-bisphosphate by ATP, the first committing step of glycolysis. This Mycobacterium leprae (strain TN) protein is ATP-dependent 6-phosphofructokinase.